The primary structure comprises 511 residues: Inner membrane ABC transporter permease protein YnjC (511 aa).

Topologically, residues 1-8 (MATPLRYA) are cytoplasmic. Residues 9–29 (LIFLLWAMVAVIYAPLIPAAL) form a helical membrane-spanning segment. Residues 30 to 62 (TLISPALSLTHWQALFADPQLPQALLATLVSTT) lie on the Periplasmic side of the membrane. In terms of domain architecture, ABC transmembrane type-1 1 spans 54-255 (LLATLVSTTI…MLLLAAYVLL (202 aa)). A helical membrane pass occupies residues 63–83 (IAAVGALLIALLVIVALWPGP). Residues 84–91 (KWQRMCAR) lie on the Cytoplasmic side of the membrane. Residues 92–112 (LPWLLAIPHVAFATSALLLFA) traverse the membrane as a helical segment. Residues 113-130 (DGGLLYDYFPYFTPPMDR) lie on the Periplasmic side of the membrane. Residues 131–151 (FGIGLGLTLAVKESAFLLWIL) traverse the membrane as a helical segment. Residues 152 to 189 (AAVLSEKWLLQQVIVLDSLGYSRWQCLNWLLLPSVAPA) lie on the Cytoplasmic side of the membrane. A helical transmembrane segment spans residues 190-210 (LAMAMLAIVAWSLSVVDVAII). Topologically, residues 211–239 (LGPGNPPTLAVISWQWLTQGDIDQQTKGA) are periplasmic. The helical transmembrane segment at 240-260 (LASLLLMLLLAAYVLLSYLLW) threads the bilayer. Over 261–284 (RSWRRTIPRVDGVRKPATPLLPGN) the chain is Cytoplasmic. Residues 285 to 305 (TLAIFLPLTGVLCVVLLAILA) form a helical membrane-spanning segment. Residues 306–318 (DQSTINSEALINS) are Periplasmic-facing. Residues 315–496 (LINSLTMGLV…LLPLIIFALT (182 aa)) form the ABC transmembrane type-1 2 domain. Residues 319-339 (LTMGLVATFIALLLLLLWLEW) traverse the membrane as a helical segment. The Cytoplasmic portion of the chain corresponds to 340 to 345 (GPQRRQ). Residues 346-366 (LWLWLPILLPALPLVAGQYTL) form a helical membrane-spanning segment. Over 367-374 (ALWLKLDG) the chain is Periplasmic. Residues 375–395 (SWTAVVWGHLLWVMPWMLFIL) form a helical membrane-spanning segment. The Cytoplasmic portion of the chain corresponds to 396 to 432 (QPAWQRIDSRLILIAQTLGWSRAKIFFYVKCPLMLRP). The helical transmembrane segment at 433-453 (VLIAFAVGFAVGIAQYMPTLW) threads the bilayer. Residues 454 to 485 (LGAGRFPTLTTEAVALSSGGSNGILAAQALWQ) lie on the Periplasmic side of the membrane. A helical transmembrane segment spans residues 486 to 506 (LLLPLIIFALTALVAKWVGYV). Residues 507–511 (RQGLR) lie on the Cytoplasmic side of the membrane.

Belongs to the binding-protein-dependent transport system permease family.

It is found in the cell inner membrane. Probably part of the binding-protein-dependent transport system YnjCD. Probably responsible for the translocation of the substrate across the membrane. This chain is Inner membrane ABC transporter permease protein YnjC (ynjC), found in Escherichia coli (strain K12).